The chain runs to 62 residues: Conotoxin Pl168 (62 aa).

The N-terminal stretch at 1 to 21 (MGMRMMFTVFLLVVLATTVVS) is a signal peptide. Positions 22-40 (FTLDRASDGANAAADLVAR) are excised as a propeptide. 2 disulfides stabilise this stretch: Cys46-Cys52 and Cys47-Cys61.

The protein belongs to the conotoxin A superfamily. Post-translationally, both Pro-53 and Pro-62 are not in cis/trans isomerization. Expressed by the venom duct.

Its subcellular location is the secreted. Probable neurotoxin with unknown target. Possibly targets ion channels. The sequence is that of Conotoxin Pl168 from Conus planorbis (Planorbis cone).